The chain runs to 206 residues: Large ribosomal subunit protein uL4 (206 aa).

The interval 63–97 is disordered; that stretch reads MYKQKGTGRARHHSARAPQFRGGGKAHGPVVRSHE. Basic residues predominate over residues 64 to 77; sequence YKQKGTGRARHHSA.

It belongs to the universal ribosomal protein uL4 family. Part of the 50S ribosomal subunit.

In terms of biological role, one of the primary rRNA binding proteins, this protein initially binds near the 5'-end of the 23S rRNA. It is important during the early stages of 50S assembly. It makes multiple contacts with different domains of the 23S rRNA in the assembled 50S subunit and ribosome. Forms part of the polypeptide exit tunnel. This Rhizobium rhizogenes (strain K84 / ATCC BAA-868) (Agrobacterium radiobacter) protein is Large ribosomal subunit protein uL4.